The sequence spans 429 residues: Apolipoprotein A-IV (429 aa).

Residues 1-20 form the signal peptide; it reads MFLKAVVLTLALVAVTGARA. 13 tandem repeats follow at residues 33-54, 60-81, 82-103, 115-136, 137-158, 159-180, 181-202, 203-224, 225-246, 247-268, 269-286, 287-308, and 309-330. Positions 33 to 330 are 13 X 22 AA approximate tandem repeats; sequence DYFSQLSSNA…QMEQLRQKLG (298 aa). The disordered stretch occupies residues 359 to 429; it reads KEKESQDNTL…QVQMLAPLES (71 aa). Over residues 381–420 the composition is skewed to low complexity; sequence QEQQQEQEQEQQQQQEQQQQQEQQREQQQQEQQQEQQQEQ.

It belongs to the apolipoprotein A1/A4/E family. As to quaternary structure, homodimer. In terms of processing, phosphorylation sites are present in the extracellular medium. Secreted in plasma.

The protein resides in the secreted. Functionally, may have a role in chylomicrons and VLDL secretion and catabolism. Required for efficient activation of lipoprotein lipase by ApoC-II; potent activator of LCAT. Apoa-IV is a major component of HDL and chylomicrons. The sequence is that of Apolipoprotein A-IV (APOA4) from Macaca fascicularis (Crab-eating macaque).